The sequence spans 292 residues: Peroxisomal 2,4-dienoyl-CoA reductase [(3E)-enoyl-CoA-producing] (292 aa).

At Ala2 the chain carries N-acetylalanine. NADP(+) is bound by residues Gly35–Ile40, Arg60–Lys64, and Asp86. Residue Arg60 participates in substrate binding. Lys64 is modified (N6-acetyllysine). Substrate is bound by residues Arg88, Phe118, and Ser126 to Asn128. Position 151 is an N6-acetyllysine (Lys151). NADP(+) contacts are provided by residues Lys182 and Pro208–Thr214. Arg219 provides a ligand contact to substrate. Position 287 is a phosphoserine (Ser287). The Microbody targeting signal signature appears at Ala290 to Leu292. The residue at position 291 (Lys291) is an N6-acetyllysine.

Belongs to the short-chain dehydrogenases/reductases (SDR) family. 2,4-dienoyl-CoA reductase subfamily. As to quaternary structure, monomer, dimer and oligomer.

Its subcellular location is the peroxisome. It catalyses the reaction a (2E,4Z)-dienoyl-CoA + NADPH + H(+) = a 4,5-saturated-(3E)-enoyl-CoA + NADP(+). The enzyme catalyses a (2E,4E)-dienoyl-CoA + NADPH + H(+) = a 4,5-saturated-(3E)-enoyl-CoA + NADP(+). The catalysed reaction is (2E,4E)-hexadienoyl-CoA + NADPH + H(+) = (3E)-hexenoyl-CoA + NADP(+). It carries out the reaction (2E,4E)-decadienoyl-CoA + NADPH + H(+) = (3E)-decenoyl-CoA + NADP(+). It catalyses the reaction (2E,4Z,7Z,10Z,13Z,16Z,19Z)-docosaheptaenoyl-CoA + NADPH + H(+) = (3E,7Z,10Z,13Z,16Z,19Z)-docosahexaenoyl-CoA + NADP(+). Auxiliary enzyme of beta-oxidation. Participates in the degradation of unsaturated fatty enoyl-CoA esters having double bonds in both even- and odd-numbered positions in peroxisome. Catalyzes the NADP-dependent reduction of 2,4-dienoyl-CoA to yield trans-3-enoyl-CoA. Has activity towards short and medium chain 2,4-dienoyl-CoAs, but also towards 2,4,7,10,13,16,19-docosaheptaenoyl-CoA, suggesting that it does not constitute a rate limiting step in the peroxisomal degradation of docosahexaenoic acid. The polypeptide is Peroxisomal 2,4-dienoyl-CoA reductase [(3E)-enoyl-CoA-producing] (Decr2) (Mus musculus (Mouse)).